We begin with the raw amino-acid sequence, 84 residues long: Insulin-like peptide 05 (84 aa).

The N-terminal stretch at 1 to 22 (MKTPILFVVVVAVLIVTDSAEG) is a signal peptide. A propeptide spanning residues 23–37 (FKGKANSFLKPLQRR) is cleaved from the precursor. Disulfide bonds link Cys-43/Cys-48, Cys-44/Cys-73, and Cys-57/Cys-61.

It belongs to the insulin family.

Its subcellular location is the secreted. Insulin decreases blood glucose concentration. May have evolved to activate insulin receptors (INSR) in vertebrates. Molecular docking studies reveals unique interaction with the human insulin receptor. In vivo, insulin-like peptide injection reduces blood glucose levels in two models of zebrafish diabetes (streptozotocin- and glucose-induced). Also shorter swimming distance of zebrafish larvae, an effect which is not observed with human insulin. The polypeptide is Insulin-like peptide 05 (Exaiptasia diaphana (Tropical sea anemone)).